The chain runs to 235 residues: Lipoprotein-releasing system ATP-binding protein LolD (235 aa).

The ABC transporter domain occupies 7–234 (LQCTNLSKRY…QQELTLMGAR (228 aa)). 43–50 (GSSGSGKS) contacts ATP.

It belongs to the ABC transporter superfamily. Lipoprotein translocase (TC 3.A.1.125) family. The complex is composed of two ATP-binding proteins (LolD) and two transmembrane proteins (LolC and LolE).

It localises to the cell inner membrane. Functionally, part of the ABC transporter complex LolCDE involved in the translocation of mature outer membrane-directed lipoproteins, from the inner membrane to the periplasmic chaperone, LolA. Responsible for the formation of the LolA-lipoprotein complex in an ATP-dependent manner. This chain is Lipoprotein-releasing system ATP-binding protein LolD, found in Pectobacterium atrosepticum (strain SCRI 1043 / ATCC BAA-672) (Erwinia carotovora subsp. atroseptica).